A 648-amino-acid chain; its full sequence is Zinc finger CW-type PWWP domain protein 1 (648 aa).

Disordered regions lie at residues 1–103 (MMTT…TNAE) and 137–237 (VVST…QDHS). Basic and acidic residues-rich tracts occupy residues 61 to 79 (KKKE…EQEK) and 88 to 97 (QAEKKEKEKS). A coiled-coil region spans residues 74–109 (SREQEKKRKAQINKQAEKKEKEKSSLTNAEFEEIVQ). Basic residues predominate over residues 194-208 (SKKKSNRLTLSKRKK). The span at 209 to 237 (EAHEKVEKTQGGHEHRQEDRLKKTVQDHS) shows a compositional bias: basic and acidic residues. The segment at 250-304 (FGQCLVWVQCSFPNCGKWRRLCGNIDPSVLPDNWSCDQNTDVQYNRCDIPEETWT) adopts a CW-type zinc-finger fold. Zn(2+)-binding residues include cysteine 259, cysteine 264, cysteine 285, and cysteine 296. Positions 317–383 (PGSIIWAKQY…VNMLKNFQEL (67 aa)) constitute a PWWP domain. A disordered region spans residues 436–648 (GERKDLQLSG…EDFPVALFGK (213 aa)). Over residues 453 to 471 (LEKKEKEEELEKEEGEKTD) the composition is skewed to basic and acidic residues. Residues 505-516 (TLQRKIMKRSLG) show a composition bias toward basic residues. Residues 585 to 595 (AKEEPRHREPL) show a composition bias toward basic and acidic residues. Residues 604-618 (LEDEASSDLDLEQLM) show a composition bias toward acidic residues. Serine 636 bears the Phosphoserine mark.

Testis.

The protein localises to the nucleus. It localises to the chromosome. Its function is as follows. Dual histone methylation reader specific for PRDM9-catalyzed histone marks (H3K4me3 and H3K36me3). Facilitates the repair of PRDM9-induced meiotic double-strand breaks (DSBs). Essential for male fertility and spermatogenesis. Required for meiosis prophase I progression in male but not in female germ cells. The protein is Zinc finger CW-type PWWP domain protein 1 (ZCWPW1) of Homo sapiens (Human).